Reading from the N-terminus, the 396-residue chain is Elongation factor Tu (396 aa).

One can recognise a tr-type G domain in the interval 10–205; the sequence is KPHVNIGTIG…AVDESIPDPV (196 aa). The segment at 19–26 is G1; that stretch reads GHVDHGKT. Position 19 to 26 (19 to 26) interacts with GTP; that stretch reads GHVDHGKT. Position 26 (T26) interacts with Mg(2+). Residues 62-66 are G2; it reads GITIN. A G3 region spans residues 83-86; the sequence is DAPG. GTP is bound by residues 83–87 and 138–141; these read DAPGH and NKAD. The interval 138–141 is G4; the sequence is NKAD. The interval 175–177 is G5; it reads SAL.

The protein belongs to the TRAFAC class translation factor GTPase superfamily. Classic translation factor GTPase family. EF-Tu/EF-1A subfamily. Monomer.

It localises to the cytoplasm. The catalysed reaction is GTP + H2O = GDP + phosphate + H(+). GTP hydrolase that promotes the GTP-dependent binding of aminoacyl-tRNA to the A-site of ribosomes during protein biosynthesis. The polypeptide is Elongation factor Tu (Mycolicibacterium vanbaalenii (strain DSM 7251 / JCM 13017 / BCRC 16820 / KCTC 9966 / NRRL B-24157 / PYR-1) (Mycobacterium vanbaalenii)).